We begin with the raw amino-acid sequence, 479 residues long: Glutamate receptor U1 (479 aa).

A signal peptide spans 1-17 (MEKSLLFLFAVTLLSVG). Residues 18–163 (CTDAGESKGS…LFGFLTPFSK (146 aa)) are Extracellular-facing. N-linked (GlcNAc...) asparagine glycosylation occurs at Asn79. A helical membrane pass occupies residues 164–184 (ETWIGILVAYMVTSLCLFLVG). The Cytoplasmic segment spans residues 185–229 (RLSPCEWTELSTEQNNFTFLNSLWFGAGAFTLQGAEPHPKSVSAR). The chain crosses the membrane as a helical span at residues 230-250 (IIAVIWWIFSIVLVAAYIASF). The Extracellular segment spans residues 251-414 (AAFLNSDSVQ…AGWNPVQPHT (164 aa)). Asn282 carries N-linked (GlcNAc...) asparagine glycosylation. Residues 415–435 (LGGIFLILGIGLALGVIAALI) traverse the membrane as a helical segment. The Cytoplasmic portion of the chain corresponds to 436–479 (ELVLKARNNADQQKKSCCSAFSEEMGERLGTNKENQGAVDSVKS).

It belongs to the glutamate-gated ion channel (TC 1.A.10.1) family. In terms of assembly, homomeric.

It localises to the cell membrane. The protein resides in the postsynaptic cell membrane. In terms of biological role, receptor for glutamate. L-glutamate acts as an excitatory neurotransmitter at many synapses in the central nervous system. The postsynaptic actions of Glu are mediated by a variety of receptors that are named according to their selective agonists. This receptor binds domoate &gt; kainate &gt; AMPA &gt; NBQX &gt; glutamate. The protein is Glutamate receptor U1 (kbp) of Xenopus laevis (African clawed frog).